Consider the following 397-residue polypeptide: Odorant receptor 59a (397 aa).

The Cytoplasmic segment spans residues 1–36 (MAEVRVDSLEFFKSHWTAWRYLGVAHFRVENWKNLY). The chain crosses the membrane as a helical span at residues 37 to 57 (VFYSIVSNLLVTLCYPVHLGI). The Extracellular segment spans residues 58-68 (SLFRNRTITED). The N-linked (GlcNAc...) asparagine glycan is linked to N62. The chain crosses the membrane as a helical span at residues 69–92 (ILNLTTFATCTACSVKCLLYAYNI). Over 93–128 (KDVLEMERLLRLLDERVVGPEQRSIYGQVRVQLRNV) the chain is Cytoplasmic. A helical membrane pass occupies residues 129–149 (LYVFIGIYMPCALFAELSFLF). Residues 150–179 (KEERGLMYPAWFPFDWLHSTRNYYIANAYQ) lie on the Extracellular side of the membrane. Residues 180–200 (IVGISFQLLQNYVSDCFPAVV) form a helical membrane-spanning segment. The Cytoplasmic segment spans residues 201–274 (LCLISSHIKM…IEAFISLPML (74 aa)). Residues 275-295 (IQFTVTALNVCIGLAALVFFV) form a helical membrane-spanning segment. At 296 to 301 (SEPMAR) the chain is on the extracellular side. Residues 302–322 (MYFIFYSLAMPLQIFPSCFFG) traverse the membrane as a helical segment. Residues 323–372 (TDNEYWFGRLHYAAFSCNWHTQNRSFKRKMMLFVEQSLKKSTAVAGGMMR) lie on the Cytoplasmic side of the membrane. The helical transmembrane segment at 373–393 (IHLDTFFSTLKGAYSLFTIII) threads the bilayer. Residues 394–397 (RMRK) lie on the Extracellular side of the membrane.

Belongs to the insect chemoreceptor superfamily. Heteromeric odorant receptor channel (TC 1.A.69) family. Or2a subfamily. As to quaternary structure, interacts with Orco. Complexes exist early in the endomembrane system in olfactory sensory neurons (OSNs), coupling these complexes to the conserved ciliary trafficking pathway. As to expression, expressed in neurons of the third antennal segment.

Its subcellular location is the cell membrane. Its function is as follows. Odorant receptor which mediates acceptance or avoidance behavior, depending on its substrates. The odorant receptor repertoire encodes a large collection of odor stimuli that vary widely in identity, intensity, and duration. May form a complex with Orco to form odorant-sensing units, providing sensitive and prolonged odorant signaling and calcium permeability. Involved in the behavioral responses to ethyl acetate, anisole, hexanoic acid, and pyrazines. This chain is Odorant receptor 59a (Or59a), found in Drosophila melanogaster (Fruit fly).